Here is a 393-residue protein sequence, read N- to C-terminus: uncharacterized protein (393 aa).

The [4Fe-4S] cluster site is built by cysteine 9, cysteine 15, cysteine 18, and cysteine 97. Positions 231, 258, 279, and 325 each coordinate S-adenosyl-L-methionine. Cysteine 352 serves as the catalytic Nucleophile.

The protein belongs to the class I-like SAM-binding methyltransferase superfamily. RNA M5U methyltransferase family.

This is an uncharacterized protein from Leptospira interrogans serogroup Icterohaemorrhagiae serovar Lai (strain 56601).